Consider the following 251-residue polypeptide: PF03932 family protein CutC (251 aa).

It belongs to the CutC family.

Its subcellular location is the cytoplasm. The chain is PF03932 family protein CutC from Agrobacterium fabrum (strain C58 / ATCC 33970) (Agrobacterium tumefaciens (strain C58)).